Reading from the N-terminus, the 274-residue chain is tRNA pseudouridine synthase A (274 aa).

Residue aspartate 60 is the Nucleophile of the active site. Substrate is bound at residue tyrosine 118.

The protein belongs to the tRNA pseudouridine synthase TruA family. Homodimer.

It carries out the reaction uridine(38/39/40) in tRNA = pseudouridine(38/39/40) in tRNA. Functionally, formation of pseudouridine at positions 38, 39 and 40 in the anticodon stem and loop of transfer RNAs. The sequence is that of tRNA pseudouridine synthase A from Picosynechococcus sp. (strain ATCC 27264 / PCC 7002 / PR-6) (Agmenellum quadruplicatum).